The following is a 271-amino-acid chain: Tryptophan synthase alpha chain (271 aa).

Residues Glu49 and Asp60 each act as proton acceptor in the active site.

The protein belongs to the TrpA family. Tetramer of two alpha and two beta chains.

The catalysed reaction is (1S,2R)-1-C-(indol-3-yl)glycerol 3-phosphate + L-serine = D-glyceraldehyde 3-phosphate + L-tryptophan + H2O. It participates in amino-acid biosynthesis; L-tryptophan biosynthesis; L-tryptophan from chorismate: step 5/5. The alpha subunit is responsible for the aldol cleavage of indoleglycerol phosphate to indole and glyceraldehyde 3-phosphate. The chain is Tryptophan synthase alpha chain from Burkholderia thailandensis (strain ATCC 700388 / DSM 13276 / CCUG 48851 / CIP 106301 / E264).